We begin with the raw amino-acid sequence, 432 residues long: Homogentisate 1,2-dioxygenase (432 aa).

The Proton acceptor role is filled by histidine 287. Histidine 330 and glutamate 336 together coordinate Fe cation. Residues tyrosine 345 and histidine 366 each coordinate homogentisate. Residue histidine 366 participates in Fe cation binding.

Belongs to the homogentisate dioxygenase family. In terms of assembly, hexamer; dimer of trimers. Fe cation is required as a cofactor.

It carries out the reaction homogentisate + O2 = 4-maleylacetoacetate + H(+). The protein operates within amino-acid degradation; L-phenylalanine degradation; acetoacetate and fumarate from L-phenylalanine: step 4/6. Its function is as follows. Involved in the catabolism of homogentisate (2,5-dihydroxyphenylacetate or 2,5-OH-PhAc), a central intermediate in the degradation of phenylalanine and tyrosine. Catalyzes the oxidative ring cleavage of the aromatic ring of homogentisate to yield maleylacetoacetate. The polypeptide is Homogentisate 1,2-dioxygenase (Pseudomonas aeruginosa (strain ATCC 15692 / DSM 22644 / CIP 104116 / JCM 14847 / LMG 12228 / 1C / PRS 101 / PAO1)).